A 311-amino-acid chain; its full sequence is Lipoyl synthase (311 aa).

7 residues coordinate [4Fe-4S] cluster: C58, C63, C69, C84, C88, C91, and S298. In terms of domain architecture, Radical SAM core spans 70 to 287 (FGHGTATFMI…EQEALAMGFR (218 aa)).

This sequence belongs to the radical SAM superfamily. Lipoyl synthase family. Requires [4Fe-4S] cluster as cofactor.

The protein resides in the cytoplasm. The enzyme catalyses [[Fe-S] cluster scaffold protein carrying a second [4Fe-4S](2+) cluster] + N(6)-octanoyl-L-lysyl-[protein] + 2 oxidized [2Fe-2S]-[ferredoxin] + 2 S-adenosyl-L-methionine + 4 H(+) = [[Fe-S] cluster scaffold protein] + N(6)-[(R)-dihydrolipoyl]-L-lysyl-[protein] + 4 Fe(3+) + 2 hydrogen sulfide + 2 5'-deoxyadenosine + 2 L-methionine + 2 reduced [2Fe-2S]-[ferredoxin]. The protein operates within protein modification; protein lipoylation via endogenous pathway; protein N(6)-(lipoyl)lysine from octanoyl-[acyl-carrier-protein]: step 2/2. Functionally, catalyzes the radical-mediated insertion of two sulfur atoms into the C-6 and C-8 positions of the octanoyl moiety bound to the lipoyl domains of lipoate-dependent enzymes, thereby converting the octanoylated domains into lipoylated derivatives. This Thiobacillus denitrificans (strain ATCC 25259 / T1) protein is Lipoyl synthase.